The chain runs to 838 residues: Calmodulin-binding transcription activator 6 (838 aa).

The CG-1 DNA-binding region spans 25–134 (VQTMLEEAKS…YRDTQEAATT (110 aa)). Residues 525-554 (QGWTALHWAAYYGREKMVAALLSAGARPNL) form an ANK repeat. IQ domains follow at residues 671–700 (SIIAAMKIQNAFRKYDTRRKIEAAYRIQCR), 713–742 (MRRQAIRIQAAFRGLQARRQYKKILWSVGV), and 788–817 (LERSVVRVQAMFRSKKAQQDYRRMKLTHEE). Residues 738 to 760 (WSVGVLEKAVLRWRQKRKGFRGL) form a calmodulin-binding region. A coiled-coil region spans residues 802–822 (KKAQQDYRRMKLTHEEAQVNH).

It belongs to the CAMTA family. Expressed in roots, stems, leaves, sepals, petals, stamen filaments, top of carpels, anthers and siliques, but not in stigmas.

Its subcellular location is the nucleus. In terms of biological role, transcription activator that binds calmodulin in a calcium-dependent manner in vitro. Binds to the DNA consensus sequence 5'-[ACG]CGCG[GTC]-3'. Regulates transcriptional activity in response to calcium signals. This Arabidopsis thaliana (Mouse-ear cress) protein is Calmodulin-binding transcription activator 6.